A 533-amino-acid polypeptide reads, in one-letter code: Putative phosphate permease jhp_1384 (533 aa).

The next 12 helical transmembrane spans lie at Ile23–Ala43, Gly47–Asn67, Ala81–Ile101, Val129–Ala149, Ser156–Trp176, Ile182–Met202, Val221–Val241, Val248–Phe268, Val286–Gly306, Val338–Gly358, Leu372–Ser392, and Leu509–Ile529.

This sequence belongs to the inorganic phosphate transporter (PiT) (TC 2.A.20) family.

It is found in the cell membrane. Its function is as follows. Potential transporter for phosphate. The chain is Putative phosphate permease jhp_1384 from Helicobacter pylori (strain J99 / ATCC 700824) (Campylobacter pylori J99).